We begin with the raw amino-acid sequence, 122 residues long: Large ribosomal subunit protein uL14 (122 aa).

The protein belongs to the universal ribosomal protein uL14 family. As to quaternary structure, part of the 50S ribosomal subunit. Forms a cluster with proteins L3 and L19. In the 70S ribosome, L14 and L19 interact and together make contacts with the 16S rRNA in bridges B5 and B8.

In terms of biological role, binds to 23S rRNA. Forms part of two intersubunit bridges in the 70S ribosome. This chain is Large ribosomal subunit protein uL14, found in Trichlorobacter lovleyi (strain ATCC BAA-1151 / DSM 17278 / SZ) (Geobacter lovleyi).